A 73-amino-acid chain; its full sequence is Gas vesicle protein M2 (73 aa).

This sequence belongs to the gas vesicle GvpA family. In terms of assembly, gvpF to GvpM interact with each other in vitro, and may form multi-subunit complex(es). Might interact with GvpA.

It is found in the gas vesicle. In terms of biological role, proteins GvpF to GvpM might be involved in nucleating gas vesicle formation. A minor component of the gas vesicle. Gas vesicles are hollow, gas filled proteinaceous nanostructures found in several microbial planktonic microorganisms. They allow positioning of halobacteria at the optimal depth for growth in the poorly aerated, shallow brine pools of their habitat. Its function is as follows. Expression of 2 c-vac DNA fragments containing 2 divergently transcribed regions (gvpE-gvpF-gvpG-gvpH-gvpI-gvpJ-gvpK-gvpL-gvpM and gvpA-gvpC-gvpN-gvpO) allows H.volcanii to produce gas vesicles. This is Gas vesicle protein M2 from Halobacterium salinarum (strain ATCC 700922 / JCM 11081 / NRC-1) (Halobacterium halobium).